Consider the following 119-residue polypeptide: Phytosulfokines 2 (119 aa).

An N-terminal signal peptide occupies residues Met1–Ala34. The propeptide occupies Ala35 to Asp109. Tyr110 and Tyr112 each carry sulfotyrosine. The propeptide occupies His115 to Pro119.

This sequence belongs to the phytosulfokine family. Post-translationally, sulfation is important for activity and for the binding to a putative membrane receptor. In terms of processing, PSK-alpha is produced by endopeptidase digestion. PSK-beta is produced from PSK-alpha by exopeptidase digestion.

The protein localises to the secreted. Promotes plant cell differentiation, organogenesis and somatic embryogenesis as well as cell proliferation. In Oryza sativa subsp. japonica (Rice), this protein is Phytosulfokines 2 (PSK2).